The primary structure comprises 135 residues: MSALVYFSSSSENTHRFMQRLGLPATRIPLNERERIQVDEPYILVVPSYGGGMAGAVPRQVIRFLNDEHNRARIRGVIASGNRNFGDAWGCAGDVIAQKCGVPWLYRFELMGTQRDIDNVRKGVNEFWQQLSRSA.

The protein belongs to the NrdI family.

Its function is as follows. Probably involved in ribonucleotide reductase function. This chain is Protein NrdI, found in Salmonella gallinarum (strain 287/91 / NCTC 13346).